We begin with the raw amino-acid sequence, 537 residues long: Glucan 1,6-alpha-glucosidase (537 aa).

Aspartate 194 (nucleophile) is an active-site residue. Catalysis depends on glutamate 236, which acts as the Proton donor.

It belongs to the glycosyl hydrolase 13 family.

It localises to the cytoplasm. The enzyme catalyses Hydrolysis of (1-&gt;6)-alpha-D-glucosidic linkages in (1-&gt;6)-alpha-D-glucans and derived oligosaccharides.. Functionally, the physiological substrates may be short isomaltosaccharides. This chain is Glucan 1,6-alpha-glucosidase (dexB), found in Streptococcus dysgalactiae subsp. equisimilis (Streptococcus equisimilis).